The primary structure comprises 208 residues: TnpB-like protein MJ0012 (208 aa).

Residues cysteine 83, cysteine 86, cysteine 100, and cysteine 103 each coordinate Zn(2+).

The protein belongs to the transposase 35 family.

This is TnpB-like protein MJ0012 from Methanocaldococcus jannaschii (strain ATCC 43067 / DSM 2661 / JAL-1 / JCM 10045 / NBRC 100440) (Methanococcus jannaschii).